A 392-amino-acid polypeptide reads, in one-letter code: Esterase EstB (392 aa).

Catalysis depends on Ser-75, which acts as the Acyl-ester intermediate.

It belongs to the class-A beta-lactamase family.

Its subcellular location is the cytoplasm. Strongly inhibited by eserin, NaF, HgCl2, SDS and Triton X-100. Its function is as follows. Acts on short-chain (C4-C6) fatty acid esters and triglycerides, including tertiary alcohol esters. Activity on p-nitrophenyl esters is generally higher than on o-nitrophenyl esters. Lacks beta-lactamase activity; it hydrolyzes the ester bond of cephalosporin substrates but there is no opening of the beta-lactam ring observed. This is Esterase EstB (estB) from Burkholderia gladioli (Pseudomonas marginata).